The chain runs to 150 residues: Triosephosphate isomerase (150 aa).

N9 and K11 together coordinate substrate. Residue H95 is the Electrophile of the active site.

This sequence belongs to the triosephosphate isomerase family. Homodimer.

It is found in the cytoplasm. The catalysed reaction is D-glyceraldehyde 3-phosphate = dihydroxyacetone phosphate. Its pathway is carbohydrate biosynthesis; gluconeogenesis. It participates in carbohydrate degradation; glycolysis; D-glyceraldehyde 3-phosphate from glycerone phosphate: step 1/1. This chain is Triosephosphate isomerase (tpiA), found in Mycoplasmoides pirum (Mycoplasma pirum).